Consider the following 192-residue polypeptide: Flavin prenyltransferase UbiX (192 aa).

Residues 10–12 (GAS), Ser-36, 92–95 (SMTT), and Arg-127 contribute to the FMN site. The dimethylallyl phosphate site is built by Tyr-157 and Lys-173.

The protein belongs to the UbiX/PAD1 family.

It carries out the reaction dimethylallyl phosphate + FMNH2 = prenylated FMNH2 + phosphate. Flavin prenyltransferase that catalyzes the synthesis of the prenylated FMN cofactor (prenyl-FMN) for 4-hydroxy-3-polyprenylbenzoic acid decarboxylase UbiD. The prenyltransferase is metal-independent and links a dimethylallyl moiety from dimethylallyl monophosphate (DMAP) to the flavin N5 and C6 atoms of FMN. This is Flavin prenyltransferase UbiX from Chlamydia pneumoniae (Chlamydophila pneumoniae).